Reading from the N-terminus, the 569-residue chain is Phosphatase and actin regulator 2 (569 aa).

The segment covering 1 to 13 has biased composition (polar residues); it reads MGQTSVSALSPQP. Residues 1–47 form a disordered region; the sequence is MGQTSVSALSPQPGSVDGLDKASIANSDGPPAGSQTPPFKRKGKLST. Position 27 is a phosphoserine (serine 27). Threonine 36 is subject to Phosphothreonine. The RPEL 1 repeat unit spans residues 71–96; that stretch reads AVLERKISTRQSREELIRRGLLKELP. Disordered regions lie at residues 98-253 and 295-483; these read QDGD…TGKP and PTLP…QEAK. Over residues 140 to 151 the composition is skewed to basic and acidic residues; that stretch reads GPPREEQAEEKT. The segment covering 162–176 has biased composition (low complexity); the sequence is GSKASSSPSASSTSS. Over residues 212–224 the composition is skewed to polar residues; it reads LSPNTVTSETSSL. Serine 357 carries the post-translational modification Phosphoserine. Acidic residues predominate over residues 386–399; it reads TDDDDEEDDDDDST. RPEL repeat units follow at residues 412-437, 450-475, and 488-513; these read DTLA…QRTS, TKLV…KQKN, and RRLS…RFNE. Over residues 423–444 the composition is skewed to basic and acidic residues; the sequence is SKKELEDKNILQRTSEEERQEL. Phosphoserine is present on serine 457. The segment covering 461–483 has biased composition (basic and acidic residues); it reads TTEELEQRSILKQKNEEEEQEAK. Residue serine 495 is modified to Phosphoserine.

This sequence belongs to the phosphatase and actin regulator family. In terms of assembly, binds PPP1CA and actin. As to expression, expressed in the brain with high levels in the cerebellum, specifically in the Purkinje cell layer, choroid plexus and thalamus (ventral, rhomboid and anterior nuclei). Moderate to high expression in the hippocampus, piriform cortex, olfactory bulb, entorhinal cortex, as well as in geniculate bodies, lamboid septal zone, preoptic area and ventral pallidum (at protein level).

This is Phosphatase and actin regulator 2 (Phactr2) from Rattus norvegicus (Rat).